A 222-amino-acid chain; its full sequence is Ribosomal RNA small subunit methyltransferase G (222 aa).

S-adenosyl-L-methionine-binding positions include glycine 84, phenylalanine 89, valine 141–glutamate 142, and arginine 154.

The protein belongs to the methyltransferase superfamily. RNA methyltransferase RsmG family.

The protein localises to the cytoplasm. It carries out the reaction guanosine(527) in 16S rRNA + S-adenosyl-L-methionine = N(7)-methylguanosine(527) in 16S rRNA + S-adenosyl-L-homocysteine. In terms of biological role, specifically methylates the N7 position of guanine in position 527 of 16S rRNA. The chain is Ribosomal RNA small subunit methyltransferase G from Bradyrhizobium sp. (strain ORS 278).